The following is a 110-amino-acid chain: UPF0122 protein STER_0914 (110 aa).

The protein belongs to the UPF0122 family.

Its function is as follows. Might take part in the signal recognition particle (SRP) pathway. This is inferred from the conservation of its genetic proximity to ftsY/ffh. May be a regulatory protein. The polypeptide is UPF0122 protein STER_0914 (Streptococcus thermophilus (strain ATCC BAA-491 / LMD-9)).